Reading from the N-terminus, the 242-residue chain is Probable transcriptional regulatory protein Bphy_2064 (242 aa).

This sequence belongs to the TACO1 family.

It is found in the cytoplasm. This Paraburkholderia phymatum (strain DSM 17167 / CIP 108236 / LMG 21445 / STM815) (Burkholderia phymatum) protein is Probable transcriptional regulatory protein Bphy_2064.